The primary structure comprises 244 residues: Krueppel-like factor 9 (244 aa).

Disordered stretches follow at residues 24–51 (VPEH…GDPG) and 80–142 (SVCS…SEKR). The segment covering 32–51 (DAERLRLPEREVTKEHGDPG) has biased composition (basic and acidic residues). Residue Ser-122 is modified to Phosphoserine. C2H2-type zinc fingers lie at residues 143 to 167 (HKCP…YRVH), 173 to 197 (FPCT…YRTH), and 203 to 225 (FRCP…ARRH).

Belongs to the Sp1 C2H2-type zinc-finger protein family. In terms of assembly, interacts with ZZEF1.

The protein resides in the nucleus. Transcription factor that binds to GC box promoter elements. Selectively activates mRNA synthesis from genes containing tandem repeats of GC boxes but represses genes with a single GC box. Acts as an epidermal circadian transcription factor regulating keratinocyte proliferation. In Sus scrofa (Pig), this protein is Krueppel-like factor 9 (KLF9).